Consider the following 253-residue polypeptide: Dof zinc finger protein DOF3.4 (253 aa).

The Dof-type zinc finger occupies 30–84; it reads LPCPRCDSSNTKFCYYNNYNFSQPRHFCKACRRYWTHGGTLRDVPVGGGTRKSAK. Residues cysteine 32, cysteine 35, cysteine 57, and cysteine 60 each contribute to the Zn(2+) site. Positions 73–103 are disordered; that stretch reads VPVGGGTRKSAKRSRTCSNSSSSSVSGVVSN. Positions 90-103 are enriched in low complexity; the sequence is SNSSSSSVSGVVSN.

As to quaternary structure, interacts with OBF4 or OBF5. In terms of tissue distribution, constitutively expressed in the whole plant.

It localises to the nucleus. Transcription factor that binds specifically to a 5'-AA[AG]G-3' consensus core sequence. Enhances the DNA binding of OBF transcription factors to OCS elements. In Arabidopsis thaliana (Mouse-ear cress), this protein is Dof zinc finger protein DOF3.4 (DOF3.4).